The sequence spans 224 residues: Cytidylate kinase (224 aa).

11-19 (GPASAGKST) lines the ATP pocket.

It belongs to the cytidylate kinase family. Type 1 subfamily.

The protein resides in the cytoplasm. The enzyme catalyses CMP + ATP = CDP + ADP. It carries out the reaction dCMP + ATP = dCDP + ADP. The chain is Cytidylate kinase from Ligilactobacillus salivarius (strain UCC118) (Lactobacillus salivarius).